The sequence spans 247 residues: Chymase (247 aa).

Residues 1–19 (MLLLPLPLLLLFLCSRAEA) form the signal peptide. Residues 20 to 21 (GE) constitute a propeptide, activation peptide. The Peptidase S1 domain maps to 22 to 245 (IIGGTECKPH…YRPWINKILQ (224 aa)). Cys51 and Cys67 are oxidised to a cystine. His66 acts as the Charge relay system in catalysis. N-linked (GlcNAc...) asparagine glycans are attached at residues Asn80 and Asn103. Asp110 functions as the Charge relay system in the catalytic mechanism. Disulfide bonds link Cys144-Cys209 and Cys175-Cys188. The active-site Charge relay system is the Ser203.

Belongs to the peptidase S1 family. Granzyme subfamily.

Its subcellular location is the secreted. The protein resides in the cytoplasmic granule. It carries out the reaction Preferential cleavage: Phe-|-Xaa &gt; Tyr-|-Xaa &gt; Trp-|-Xaa &gt; Leu-|-Xaa.. Its function is as follows. Major secreted protease of mast cells with suspected roles in vasoactive peptide generation, extracellular matrix degradation, and regulation of gland secretion. In Papio hamadryas (Hamadryas baboon), this protein is Chymase (CMA1).